The following is a 779-amino-acid chain: Protein zer-1 homolog (779 aa).

Alanine 2 carries the N-acetylalanine modification. LRR repeat units lie at residues 226–245 (SLVL…IVQL), 246–281 (HKLR…KLTR), and 291–315 (LGNL…KTDE). ARM repeat units lie at residues 440–480 (RSEQ…NFSI), 524–569 (DNDH…NITD), 571–613 (TPDN…NVAE), 615–656 (KELR…HIMF), and 727–769 (PDKY…HCSN).

This sequence belongs to the zyg-11 family. Interacts with the ELOC-ELOB/Elongin BC complex. Part of an E3 ubiquitin ligase complex including ZER1, CUL2 and Elongin BC.

Its function is as follows. Serves as substrate adapter subunit in the E3 ubiquitin ligase complex ZYG11B-CUL2-Elongin BC. Acts redudantly with ZYG11B to target substrates bearing N-terminal glycine degrons for proteasomal degradation. Involved in the clearance of proteolytic fragments generated by caspase cleavage during apoptosis since N-terminal glycine degrons are strongly enriched at caspase cleavage sites. Also important in the quality control of protein N-myristoylation in which N-terminal glycine degrons are conditionally exposed after a failure of N-myristoylation. In Mus musculus (Mouse), this protein is Protein zer-1 homolog.